The primary structure comprises 312 residues: Porphobilinogen deaminase (312 aa).

Residue C241 is modified to S-(dipyrrolylmethanemethyl)cysteine.

The protein belongs to the HMBS family. In terms of assembly, monomer. Dipyrromethane serves as cofactor.

It catalyses the reaction 4 porphobilinogen + H2O = hydroxymethylbilane + 4 NH4(+). The protein operates within porphyrin-containing compound metabolism; protoporphyrin-IX biosynthesis; coproporphyrinogen-III from 5-aminolevulinate: step 2/4. In terms of biological role, tetrapolymerization of the monopyrrole PBG into the hydroxymethylbilane pre-uroporphyrinogen in several discrete steps. This chain is Porphobilinogen deaminase, found in Cytophaga hutchinsonii (strain ATCC 33406 / DSM 1761 / CIP 103989 / NBRC 15051 / NCIMB 9469 / D465).